Reading from the N-terminus, the 513-residue chain is GMP synthase [glutamine-hydrolyzing] (513 aa).

The 191-residue stretch at 8–198 (MILVLDFGSQ…VFGVCDCEGK (191 aa)) folds into the Glutamine amidotransferase type-1 domain. The active-site Nucleophile is C85. Catalysis depends on residues H172 and E174. Positions 199-388 (WSMENFIEIE…LGLPDDIVWR (190 aa)) constitute a GMPS ATP-PPase domain. 226–232 (SGGVDSS) provides a ligand contact to ATP.

In terms of assembly, homodimer.

It carries out the reaction XMP + L-glutamine + ATP + H2O = GMP + L-glutamate + AMP + diphosphate + 2 H(+). The protein operates within purine metabolism; GMP biosynthesis; GMP from XMP (L-Gln route): step 1/1. In terms of biological role, catalyzes the synthesis of GMP from XMP. The sequence is that of GMP synthase [glutamine-hydrolyzing] from Bacillus velezensis (strain DSM 23117 / BGSC 10A6 / LMG 26770 / FZB42) (Bacillus amyloliquefaciens subsp. plantarum).